The sequence spans 194 residues: ATP-dependent Clp protease proteolytic subunit 1 (194 aa).

Ser98 serves as the catalytic Nucleophile. Residue His123 is part of the active site.

The protein belongs to the peptidase S14 family. In terms of assembly, fourteen ClpP subunits assemble into 2 heptameric rings which stack back to back to give a disk-like structure with a central cavity, resembling the structure of eukaryotic proteasomes.

Its subcellular location is the cytoplasm. The enzyme catalyses Hydrolysis of proteins to small peptides in the presence of ATP and magnesium. alpha-casein is the usual test substrate. In the absence of ATP, only oligopeptides shorter than five residues are hydrolyzed (such as succinyl-Leu-Tyr-|-NHMec, and Leu-Tyr-Leu-|-Tyr-Trp, in which cleavage of the -Tyr-|-Leu- and -Tyr-|-Trp bonds also occurs).. In terms of biological role, cleaves peptides in various proteins in a process that requires ATP hydrolysis. Has a chymotrypsin-like activity. Plays a major role in the degradation of misfolded proteins. ClpXP1 is involved in the complete degradation of the Site-2 clipped anti-sigma-W factor RsiW. This results in the release of SigW and the transcription activation of the genes under the control of the sigma-W factor. This Halalkalibacterium halodurans (strain ATCC BAA-125 / DSM 18197 / FERM 7344 / JCM 9153 / C-125) (Bacillus halodurans) protein is ATP-dependent Clp protease proteolytic subunit 1.